The chain runs to 463 residues: L-seryl-tRNA(Sec) selenium transferase (463 aa).

Lysine 295 is subject to N6-(pyridoxal phosphate)lysine.

Belongs to the SelA family. As to quaternary structure, homodecamer; pentamer of dimers. Binds only one seryl-tRNA(Sec) per dimer. It depends on pyridoxal 5'-phosphate as a cofactor.

The protein localises to the cytoplasm. It catalyses the reaction L-seryl-tRNA(Sec) + selenophosphate + H(+) = L-selenocysteinyl-tRNA(Sec) + phosphate. Its pathway is aminoacyl-tRNA biosynthesis; selenocysteinyl-tRNA(Sec) biosynthesis; selenocysteinyl-tRNA(Sec) from L-seryl-tRNA(Sec) (bacterial route): step 1/1. Converts seryl-tRNA(Sec) to selenocysteinyl-tRNA(Sec) required for selenoprotein biosynthesis. This chain is L-seryl-tRNA(Sec) selenium transferase, found in Edwardsiella ictaluri (strain 93-146).